The following is a 253-amino-acid chain: Isopentenyl-diphosphate delta-isomerase IDI1 (253 aa).

A substrate-binding site is contributed by K61. H65 and H76 together coordinate Mg(2+). The Nudix hydrolase domain maps to 74–224 (LLHRAFSVFL…SLVFTPWFKL (151 aa)). Positions 94 and 99 each coordinate substrate. Residue C111 is part of the active site. S112 contributes to the substrate binding site. The short motif at 112–145 (SHPLHIPTETGSTLEDSIAGVKRAAQRKLEHELG) is the Nudix box element. 2 residues coordinate Mg(2+): E174 and E176. Residue E176 is part of the active site.

The protein belongs to the IPP isomerase type 1 family. The cofactor is Mg(2+).

The enzyme catalyses isopentenyl diphosphate = dimethylallyl diphosphate. It functions in the pathway isoprenoid biosynthesis; dimethylallyl diphosphate biosynthesis; dimethylallyl diphosphate from isopentenyl diphosphate: step 1/1. Functionally, isopentenyl-diphosphate delta-isomerase; part of the second module of ergosterol biosynthesis pathway that includes the middle steps of the pathway. IDI1 catalyzes the 1,3-allylic rearrangement of isopentenyl (IPP) to its highly electrophilic allylic isomer, dimethylallyl diphosphate (DMAPP). The second module is carried out in the vacuole and involves the formation of farnesyl diphosphate, which is also an important intermediate in the biosynthesis of ubiquinone, dolichol, heme and prenylated proteins. Activity by the mevalonate kinase ERG12 (FG05912) first converts mevalonate into 5-phosphomevalonate. 5-phosphomevalonate is then further converted to 5-diphosphomevalonate by the phosphomevalonate kinase ERG8 (FG09764). The diphosphomevalonate decarboxylase ERG19 (FG10424) then produces isopentenyl diphosphate. The isopentenyl-diphosphate delta-isomerase IDI1 (FG09722) then catalyzes the 1,3-allylic rearrangement of the homoallylic substrate isopentenyl (IPP) to its highly electrophilic allylic isomer, dimethylallyl diphosphate (DMAPP). Finally the farnesyl diphosphate synthase ERG20 (FG06784) catalyzes the sequential condensation of isopentenyl pyrophosphate with dimethylallyl pyrophosphate, and then with the resultant geranylpyrophosphate to the ultimate product farnesyl pyrophosphate. This is Isopentenyl-diphosphate delta-isomerase IDI1 from Gibberella zeae (strain ATCC MYA-4620 / CBS 123657 / FGSC 9075 / NRRL 31084 / PH-1) (Wheat head blight fungus).